The chain runs to 389 residues: Basigin (389 aa).

Residues 1 to 21 (MAAALLLALAFTLLSGQGACA) form the signal peptide. Topologically, residues 22–325 (AAGFLKAPLS…ETISLRVRSR (304 aa)) are extracellular. The region spanning 37 to 120 (GGSVVLHCEA…SSDPDRNHLT (84 aa)) is the Ig-like domain. Disulfide bonds link C44/C108, C157/C203, and C242/C305. The region spanning 138-219 (EPGTIQTSVQ…VGRSEINVEG (82 aa)) is the Ig-like C2-type domain. Residues N160, N270, and N306 are each glycosylated (N-linked (GlcNAc...) asparagine). Positions 221-319 (PRIKVGKKSE…AQGTTRETIS (99 aa)) constitute an Ig-like V-type domain. Residues 326–349 (MAALWPFLGIVAEVLVLVTIIFIY) traverse the membrane as a helical segment. The Cytoplasmic segment spans residues 350–389 (EKRRKPDQTLDEDDPGAAPLKGSGTHMNDKDKNVRQRNAT). Residues 356-389 (DQTLDEDDPGAAPLKGSGTHMNDKDKNVRQRNAT) are disordered. T358 carries the post-translational modification Phosphothreonine. Residue S372 is modified to Phosphoserine.

In terms of assembly, interacts with NXNL1. Interacts with SLC2A1 and SLC16A1/GLUT1. Interacts with XKR8; promoting its localization at the cell membrane. Interacts with ATP1B2, MAG and L1CAM. Interacts with SLC16A7. Interacts with VEGFA, KDR/VEGFR2, PPIA/CYPA, SLC1A3, SLC16A11 and SLC16A12. Interacts with PPIL2; regulates BSG transport to the cell membrane. Interacts with SLC16A1; interaction mediates SLC16A1 targeting to the plasma membrane. Interacts with SLC16A3; interaction mediates SLC16A3 targeting to the plasma membrane. As to quaternary structure, interacts with SLC16A6; this interaction mediates targeting to the plasma membrane. N-glycosylated. In terms of processing, N-glycosylated. During spermatogenesis, probably deglycosylated during epididymal transit. In terms of tissue distribution, retina-specific. Expressed in both rods and cones (at protein level). Testis and caput, corpus and cauda epididymides (at protein level). Expressed in the brain, lung, liver, kidney, heart, spleen, uterus, retina and skeletal muscle.

It is found in the cell membrane. Its subcellular location is the photoreceptor inner segment. The protein resides in the cell projection. It localises to the cilium. The protein localises to the photoreceptor outer segment. It is found in the endoplasmic reticulum membrane. Its subcellular location is the basolateral cell membrane. Essential for normal retinal maturation and development. Acts as a retinal cell surface receptor for NXNL1 and plays an important role in NXNL1-mediated survival of retinal cone photoreceptors. In association with glucose transporter SLC16A1/GLUT1 and NXNL1, promotes retinal cone survival by enhancing aerobic glycolysis and accelerating the entry of glucose into photoreceptors. Its function is as follows. Signaling receptor for cyclophilins, essential for PPIA/CYPA and PPIB/CYPB-dependent signaling related to chemotaxis and adhesion of immune cells. Plays an important role in targeting the monocarboxylate transporters SLC16A1, SLC16A3 and SLC16A8 to the plasma membrane. Acts as a coreceptor for vascular endothelial growth factor receptor 2 (KDR/VEGFR2) in endothelial cells enhancing its VEGFA-mediated activation and downstream signaling. Promotes angiogenesis through EPAS1/HIF2A-mediated up-regulation of VEGFA and KDR/VEGFR2 in endothelial cells. Plays an important role in spermatogenesis; mediates interactions between germ cells and Sertoli cell and is essential for the development/differentiation of germ cells to round spermatids. This chain is Basigin (Bsg), found in Mus musculus (Mouse).